The chain runs to 52 residues: ERMES regulator 1 (52 aa).

At 1–27 the chain is on the mitochondrial intermembrane side; that stretch reads MIFFFNQIRSIFTALHTPTQQIQLSRR. Residues 28 to 46 traverse the membrane as a helical segment; the sequence is AFFQFLGYLGSCVVISLAA. The Cytoplasmic segment spans residues 47-52; that stretch reads QSKYVQ.

This sequence belongs to the EMR1 family.

It localises to the mitochondrion outer membrane. Its function is as follows. Mediates the formation of endoplasmic reticulum (ER)-mitochondria encounter structure (ERMES) foci, thereby contributing to the formation of ER-mitochondrial contact sites. The protein is ERMES regulator 1 of Saccharomyces cerevisiae (strain ATCC 204508 / S288c) (Baker's yeast).